A 237-amino-acid chain; its full sequence is Phosphoribosylaminoimidazole-succinocarboxamide synthase (237 aa).

This sequence belongs to the SAICAR synthetase family.

It carries out the reaction 5-amino-1-(5-phospho-D-ribosyl)imidazole-4-carboxylate + L-aspartate + ATP = (2S)-2-[5-amino-1-(5-phospho-beta-D-ribosyl)imidazole-4-carboxamido]succinate + ADP + phosphate + 2 H(+). Its pathway is purine metabolism; IMP biosynthesis via de novo pathway; 5-amino-1-(5-phospho-D-ribosyl)imidazole-4-carboxamide from 5-amino-1-(5-phospho-D-ribosyl)imidazole-4-carboxylate: step 1/2. The chain is Phosphoribosylaminoimidazole-succinocarboxamide synthase from Pectobacterium atrosepticum (strain SCRI 1043 / ATCC BAA-672) (Erwinia carotovora subsp. atroseptica).